An 875-amino-acid chain; its full sequence is Neurotrypsin (875 aa).

Residues 1 to 20 (MTLARFVLALMLGALPEVVG) form the signal peptide. Asn-26 carries N-linked (GlcNAc...) asparagine glycosylation. The tract at residues 29-88 (LHHSHRHSPPPGPHYPYYLPTQQRPPRTRPPPPLPRFPRPPRALPAQRPHALQAGHTPRP) is disordered. A compositionally biased stretch (low complexity) spans 43 to 53 (YPYYLPTQQRP). The span at 56-71 (TRPPPPLPRFPRPPRA) shows a compositional bias: pro residues. In terms of domain architecture, Kringle spans 93–165 (CPAGEPWVSV…GKVDWGYCDC (73 aa)). Cystine bridges form between Cys-93–Cys-165, Cys-109–Cys-149, Cys-138–Cys-163, Cys-195–Cys-259, Cys-208–Cys-269, Cys-239–Cys-249, Cys-305–Cys-369, Cys-318–Cys-379, Cys-349–Cys-359, Cys-412–Cys-475, Cys-425–Cys-485, Cys-455–Cys-465, Cys-525–Cys-589, Cys-538–Cys-599, Cys-569–Cys-579, Cys-619–Cys-750, Cys-661–Cys-677, Cys-765–Cys-831, Cys-794–Cys-808, and Cys-821–Cys-850. 4 consecutive SRCR domains span residues 170-271 (VRLR…TCSF), 280-381 (IRLA…SCTP), 387-487 (IRLA…ACYP), and 500-601 (VRLV…ICDY). The interval 619-630 (CGLRLLHRRQKR) is zymogen activation region. Residues 631 to 874 (IIGGKNSLRG…FVPWIKSVTK (244 aa)) enclose the Peptidase S1 domain. His-676 acts as the Charge relay system in catalysis. A glycan (N-linked (GlcNAc...) asparagine) is linked at Asn-683. Residue Asp-726 is the Charge relay system of the active site. Ser-825 acts as the Charge relay system in catalysis.

This sequence belongs to the peptidase S1 family.

It is found in the secreted. Functionally, plays a role in neuronal plasticity and the proteolytic action may subserve structural reorganizations associated with learning and memory operations. The protein is Neurotrypsin (PRSS12) of Pan troglodytes (Chimpanzee).